The primary structure comprises 188 residues: Peptidyl-tRNA hydrolase (188 aa).

Position 18 (Tyr18) interacts with tRNA. Residue His23 is the Proton acceptor of the active site. Positions 67, 69, and 115 each coordinate tRNA.

It belongs to the PTH family. In terms of assembly, monomer.

Its subcellular location is the cytoplasm. It carries out the reaction an N-acyl-L-alpha-aminoacyl-tRNA + H2O = an N-acyl-L-amino acid + a tRNA + H(+). Hydrolyzes ribosome-free peptidyl-tRNAs (with 1 or more amino acids incorporated), which drop off the ribosome during protein synthesis, or as a result of ribosome stalling. Functionally, catalyzes the release of premature peptidyl moieties from peptidyl-tRNA molecules trapped in stalled 50S ribosomal subunits, and thus maintains levels of free tRNAs and 50S ribosomes. This is Peptidyl-tRNA hydrolase from Salinibacter ruber (strain DSM 13855 / M31).